The following is a 972-amino-acid chain: Fibroblast growth factor receptor (972 aa).

Positions 1–43 (MSLPRCPRTRTVMFSRTLTRCYPQRTLWIAILCVICSWTLSTA) are cleaved as a signal peptide. Over 44 to 547 (GATTIRDKEV…NNMQPTSKTQ (504 aa)) the chain is Extracellular. The Fibronectin type-III domain maps to 57 to 152 (APQDLTAIPV…YIEASGTPPI (96 aa)). Residues Asn109, Asn121, Asn191, Asn203, Asn239, Asn272, Asn315, Asn390, Asn398, Asn419, Asn422, and Asn460 are each glycosylated (N-linked (GlcNAc...) asparagine). In terms of domain architecture, Ig-like C2-type 1 spans 150–242 (PPIPPTLRRN…GQPIHVNFTL (93 aa)). Cys176 and Cys226 are oxidised to a cystine. Ig-like C2-type domains lie at 282–374 (PRFT…YDVK) and 383–517 (PIMS…AYLD). The cysteines at positions 306 and 358 are disulfide-linked. Cys403 and Cys501 are oxidised to a cystine. The helical transmembrane segment at 548-568 (LIIFSVVGFVVVLILVTCIAI) threads the bilayer. Residues 569–972 (LCKQTQVRHR…QTRDCCPYAN (404 aa)) are Cytoplasmic-facing. The Protein kinase domain occupies 639-925 (LTVGKTIGEG…ISVSSNQDYL (287 aa)). Residues 645-653 (IGEGAFGKV) and Lys673 each bind ATP. The active-site Proton acceptor is the Asp781. Phosphotyrosine; by autocatalysis is present on Tyr812.

The protein belongs to the protein kinase superfamily. Tyr protein kinase family. Fibroblast growth factor receptor subfamily.

It localises to the membrane. It catalyses the reaction L-tyrosyl-[protein] + ATP = O-phospho-L-tyrosyl-[protein] + ADP + H(+). Receptor for basic fibroblast growth factor. This chain is Fibroblast growth factor receptor (FGFR), found in Strongylocentrotus purpuratus (Purple sea urchin).